The primary structure comprises 634 residues: MLRSLKPVTAFALKRSLLSIKQVHGTQSVLRSPVRNSSSISSADEDPNLPWYLRTETKVAKPIEMPELPESSPQKLHELVKYFIKDLGIEDIKVFDLSMNEEEEVDGSKFLGKYMVIGTGKSNKHLAKAGTEMMNFLKHEYGTPSSNIEGLVKDTLLIRQQKRLKRKGGKLSSPQSNDFGVSANSWIMIDTNIDDIYVHFLTEKRRKELNLEYLWCSAEDRPLYHQEVATTQSDDIFSGIRNYHTSSRTSRTYGVSRPQHLPSFTRSYSSTPSINELVHLSESGSYQEISKFTNHNDPEVTQLILLSHINFFQNLPLNKAIAHADELYKSFEAAFPAFDASSDHWKIRYLFLDMMHKVDKSRWSFSIIENNFYGKSSHGHRLTEEDLKYFIKSVIESPELSNRYLDPNSNYDHDSTPFKDEGSESFVSISNNKLGKIAKFIQLCYPDLPEGNVFNHFESWDSTVLPLLLTVVSQTTHENFITPVKLSELSSPIANHKPVPYNKTHLDALLEVIRVSQPNFLLNDETRMNFIFILTILANAHEWERVYKLWDAALENSVPINPGSTFKPDTRPWAYLIDLVAKIGDPANARVFLQKRWPQMIHNGIDATDPKIGTATAVLLKVADPENVLFKNVK.

Residues 1 to 36 (MLRSLKPVTAFALKRSLLSIKQVHGTQSVLRSPVRN) constitute a mitochondrion transit peptide.

The protein belongs to the ATP25 family.

It localises to the mitochondrion inner membrane. Probable mitochondrial mRNA stabilization factor. The polypeptide is ATPase synthesis protein 25, mitochondrial (ATP25) (Komagataella phaffii (strain GS115 / ATCC 20864) (Yeast)).